The primary structure comprises 274 residues: Large ribosomal subunit protein uL2 (274 aa).

The interval 224–274 is disordered; it reads VAMNPVDHPHGGGEGRTSGGRHPVTPWGIPTKGYKTRRNKRSNKLIVQKRK. The segment covering 257–274 has biased composition (basic residues); it reads YKTRRNKRSNKLIVQKRK.

The protein belongs to the universal ribosomal protein uL2 family. In terms of assembly, part of the 50S ribosomal subunit. Forms a bridge to the 30S subunit in the 70S ribosome.

One of the primary rRNA binding proteins. Required for association of the 30S and 50S subunits to form the 70S ribosome, for tRNA binding and peptide bond formation. It has been suggested to have peptidyltransferase activity; this is somewhat controversial. Makes several contacts with the 16S rRNA in the 70S ribosome. This chain is Large ribosomal subunit protein uL2, found in Francisella tularensis subsp. tularensis (strain FSC 198).